The sequence spans 240 residues: Proteasome subunit alpha (240 aa).

This sequence belongs to the peptidase T1A family. In terms of assembly, the 20S proteasome core is composed of 14 alpha and 14 beta subunits that assemble into four stacked heptameric rings, resulting in a barrel-shaped structure. The two inner rings, each composed of seven catalytic beta subunits, are sandwiched by two outer rings, each composed of seven alpha subunits. The catalytic chamber with the active sites is on the inside of the barrel. Has a gated structure, the ends of the cylinder being occluded by the N-termini of the alpha-subunits. Is capped at one or both ends by the proteasome regulatory ATPase, PAN.

It is found in the cytoplasm. Its activity is regulated as follows. The formation of the proteasomal ATPase PAN-20S proteasome complex, via the docking of the C-termini of PAN into the intersubunit pockets in the alpha-rings, triggers opening of the gate for substrate entry. Interconversion between the open-gate and close-gate conformations leads to a dynamic regulation of the 20S proteasome proteolysis activity. Component of the proteasome core, a large protease complex with broad specificity involved in protein degradation. This is Proteasome subunit alpha from Methanoculleus marisnigri (strain ATCC 35101 / DSM 1498 / JR1).